The sequence spans 164 residues: MRRVVCPGSFDPVTNGHIDIIRRAAKQNEEVIVAVLVNVNKRGLFTADEKLEMLREATKEFDNVTVAKFDGLLVDFCRAHDVSAIVRSLRSVSDFDYELQIAQMNYQLSGIDTLFLTANPKYSFLSSSLVREIAQYNGDVSALVPPYVEERLRAKYAELAKKNG.

A substrate-binding site is contributed by Ser9. ATP-binding positions include 9-10 and His17; that span reads SF. Lys41, Leu73, and Arg87 together coordinate substrate. ATP-binding positions include Glu98 and 122–128; that span reads YSFLSSS.

Belongs to the bacterial CoaD family. In terms of assembly, homohexamer. It depends on Mg(2+) as a cofactor.

The protein localises to the cytoplasm. The catalysed reaction is (R)-4'-phosphopantetheine + ATP + H(+) = 3'-dephospho-CoA + diphosphate. It participates in cofactor biosynthesis; coenzyme A biosynthesis; CoA from (R)-pantothenate: step 4/5. Its function is as follows. Reversibly transfers an adenylyl group from ATP to 4'-phosphopantetheine, yielding dephospho-CoA (dPCoA) and pyrophosphate. The polypeptide is Phosphopantetheine adenylyltransferase (Thermobifida fusca (strain YX)).